The following is a 196-amino-acid chain: MVTIGVDEAGRGPLAGPVVAAAVVLCKPRPSGLDDSKKLSAARRAELEEKIKRRCRWAVGVVEPDEIDRLNIFGATMLAMTLAVGALCEQLAHDEDVGEVLVDGNLTPHGRRPEWCWPARPIVGGDALEPCISAASIIAKEHRDRLMREAALAHPHYGWERNAGYGTPEHLAALREHGPTPLHRRSFAPVAQLQLL.

The RNase H type-2 domain maps to 1-196 (MVTIGVDEAG…FAPVAQLQLL (196 aa)). D7, E8, and D103 together coordinate a divalent metal cation.

The protein belongs to the RNase HII family. Mn(2+) serves as cofactor. The cofactor is Mg(2+).

The protein localises to the cytoplasm. It catalyses the reaction Endonucleolytic cleavage to 5'-phosphomonoester.. In terms of biological role, endonuclease that specifically degrades the RNA of RNA-DNA hybrids. The sequence is that of Ribonuclease HII from Novosphingobium aromaticivorans (strain ATCC 700278 / DSM 12444 / CCUG 56034 / CIP 105152 / NBRC 16084 / F199).